The chain runs to 444 residues: Tubulin beta-8 chain (444 aa).

The MREI motif signature appears at 1–4; the sequence is MREI. GTP is bound by residues Gln-11, Glu-69, Ser-138, Gly-142, Thr-143, and Gly-144. Glu-69 provides a ligand contact to Mg(2+). Residue Ser-172 is modified to Phosphoserine; by CDK1. Positions 204 and 226 each coordinate GTP. The disordered stretch occupies residues 423 to 444; sequence QQYQDATAEEEEDEEYAEEEVA. The span at 429 to 444 shows a compositional bias: acidic residues; it reads TAEEEEDEEYAEEEVA. Glu-436 bears the 5-glutamyl polyglutamate mark.

It belongs to the tubulin family. Dimer of alpha and beta chains. A typical microtubule is a hollow water-filled tube with an outer diameter of 25 nm and an inner diameter of 15 nM. Alpha-beta heterodimers associate head-to-tail to form protofilaments running lengthwise along the microtubule wall with the beta-tubulin subunit facing the microtubule plus end conferring a structural polarity. Microtubules usually have 13 protofilaments but different protofilament numbers can be found in some organisms and specialized cells. The cofactor is Mg(2+). Post-translationally, some glutamate residues at the C-terminus are polyglutamylated, resulting in polyglutamate chains on the gamma-carboxyl group. Polyglutamylation plays a key role in microtubule severing by spastin (SPAST). SPAST preferentially recognizes and acts on microtubules decorated with short polyglutamate tails: severing activity by SPAST increases as the number of glutamates per tubulin rises from one to eight, but decreases beyond this glutamylation threshold. Glutamylation is also involved in cilia motility. Some glutamate residues at the C-terminus are monoglycylated but not polyglycylated due to the absence of functional TTLL10 in human. Monoglycylation is mainly limited to tubulin incorporated into cilia and flagella axonemes, which is required for their stability and maintenance. Flagella glycylation controls sperm motility. Both polyglutamylation and monoglycylation can coexist on the same protein on adjacent residues, and lowering glycylation levels increases polyglutamylation, and reciprocally. In terms of processing, phosphorylated on Ser-172 by CDK1 during the cell cycle, from metaphase to telophase, but not in interphase. This phosphorylation inhibits tubulin incorporation into microtubules. As to expression, expressed at a high level in oocytes, at different stages of development.

Its subcellular location is the cytoplasm. The protein resides in the cytoskeleton. It localises to the spindle. Its function is as follows. Tubulin is the major constituent of microtubules, a cylinder consisting of laterally associated linear protofilaments composed of alpha- and beta-tubulin heterodimers. Microtubules grow by the addition of GTP-tubulin dimers to the microtubule end, where a stabilizing cap forms. Below the cap, tubulin dimers are in GDP-bound state, owing to GTPase activity of alpha-tubulin. TUBB8 has a key role in meiotic spindle assembly and oocyte maturation. The protein is Tubulin beta-8 chain of Homo sapiens (Human).